Here is a 274-residue protein sequence, read N- to C-terminus: Penicillin-insensitive murein endopeptidase (274 aa).

Residues 1–19 (MKKTALALLALLVSSASLA) form the signal peptide. 3 disulfide bridges follow: Cys44–Cys265, Cys187–Cys235, and Cys216–Cys223. Residues His110, His113, Asp120, Asp147, His150, and His211 each contribute to the Zn(2+) site. Residues 225 to 274 (DQPLPPPGDGCGAELQSWFEPPEPGTTKPEKKTPPPLPPSCQALLDEHVL) form a disordered region.

Belongs to the peptidase M74 family. Dimer. It depends on Zn(2+) as a cofactor.

The protein localises to the periplasm. Functionally, murein endopeptidase that cleaves the D-alanyl-meso-2,6-diamino-pimelyl amide bond that connects peptidoglycan strands. Likely plays a role in the removal of murein from the sacculus. This is Penicillin-insensitive murein endopeptidase from Citrobacter koseri (strain ATCC BAA-895 / CDC 4225-83 / SGSC4696).